The following is a 513-amino-acid chain: Arabinoxylan arabinofuranohydrolase (513 aa).

Residues 1 to 26 (MRKKCSVCLWILVLLLSCLSGKSAYA) form the signal peptide. The Proton acceptor role is filled by Asp-50. The active-site Proton donor is Glu-251. Asn-314 contacts substrate. Positions 382-511 (NRVEAETFAW…LFNFDYWQFT (130 aa)) constitute a CBM6 domain. The Ca(2+) site is built by Glu-385, Glu-387, Asn-409, Gln-410, and Asp-506.

It is found in the secreted. The enzyme catalyses Hydrolysis of terminal non-reducing alpha-L-arabinofuranoside residues in alpha-L-arabinosides.. It participates in glycan degradation; xylan degradation. Functionally, cleaves arabinose units from O-2- or O-3-monosubstituted xylose residues, thereby assisting in arabinoxylan (AX) and short-chain arabinoxylo-oligosaccharide (AXOS) degradation. Is more active on wheat bran AXOS than on wheat water-extractable AX and rye water-extractable AX. Does not display endoxylanase, xylosidase or arabinanase activity. The sequence is that of Arabinoxylan arabinofuranohydrolase (xynD) from Bacillus subtilis (strain 168).